A 291-amino-acid chain; its full sequence is UPF0173 metal-dependent hydrolase Rmet_5695 (291 aa).

It belongs to the UPF0173 family.

The chain is UPF0173 metal-dependent hydrolase Rmet_5695 from Cupriavidus metallidurans (strain ATCC 43123 / DSM 2839 / NBRC 102507 / CH34) (Ralstonia metallidurans).